We begin with the raw amino-acid sequence, 270 residues long: Shikimate dehydrogenase (NADP(+)) (270 aa).

Shikimate-binding positions include 14–16 (SKS) and Thr61. Lys65 acts as the Proton acceptor in catalysis. 2 residues coordinate shikimate: Asn86 and Asp101. NADP(+)-binding positions include 126–130 (GAGGA), 150–155 (NRTVSK), and Met213. Position 215 (Tyr215) interacts with shikimate. Gly237 provides a ligand contact to NADP(+).

It belongs to the shikimate dehydrogenase family. As to quaternary structure, homodimer.

It carries out the reaction shikimate + NADP(+) = 3-dehydroshikimate + NADPH + H(+). It participates in metabolic intermediate biosynthesis; chorismate biosynthesis; chorismate from D-erythrose 4-phosphate and phosphoenolpyruvate: step 4/7. Involved in the biosynthesis of the chorismate, which leads to the biosynthesis of aromatic amino acids. Catalyzes the reversible NADPH linked reduction of 3-dehydroshikimate (DHSA) to yield shikimate (SA). This Hahella chejuensis (strain KCTC 2396) protein is Shikimate dehydrogenase (NADP(+)).